The following is a 258-amino-acid chain: UPF0246 protein Sfri_2896 (258 aa).

The protein belongs to the UPF0246 family.

This is UPF0246 protein Sfri_2896 from Shewanella frigidimarina (strain NCIMB 400).